The sequence spans 312 residues: Coiled-coil domain-containing protein 42 homolog (312 aa).

Coiled-coil stretches lie at residues 34-121 (RLLE…RLKE) and 172-233 (ATHQ…WESQ).

This sequence belongs to the CFAP73 family.

In Nematostella vectensis (Starlet sea anemone), this protein is Coiled-coil domain-containing protein 42 homolog.